A 173-amino-acid chain; its full sequence is Adenine phosphoribosyltransferase (173 aa).

Belongs to the purine/pyrimidine phosphoribosyltransferase family. As to quaternary structure, homodimer.

The protein localises to the cytoplasm. It catalyses the reaction AMP + diphosphate = 5-phospho-alpha-D-ribose 1-diphosphate + adenine. The protein operates within purine metabolism; AMP biosynthesis via salvage pathway; AMP from adenine: step 1/1. Its function is as follows. Catalyzes a salvage reaction resulting in the formation of AMP, that is energically less costly than de novo synthesis. This is Adenine phosphoribosyltransferase from Macrococcus caseolyticus (strain JCSC5402) (Macrococcoides caseolyticum).